We begin with the raw amino-acid sequence, 952 residues long: Histone deacetylase 7 (952 aa).

Transcription repression regions lie at residues 1–268 and 218–546; these read MDLR…DSDR and GPNP…EHAG. Residues 49 to 149 are interaction with MEF2A; the sequence is SMDTPMPELQ…LPSDPPEHFP (101 aa). Ser-109 carries the post-translational modification Phosphoserine. Disordered stretches follow at residues 130–224 and 261–283; these read LSSF…PILG and PARA…ILGS. At Ser-155 the chain carries Phosphoserine; by MARK2, MARK3 and PKD/PRKD1. Residues 167–181 show a composition bias toward basic and acidic residues; the sequence is KSLERRKNPLLRKES. The residue at position 181 (Ser-181) is a Phosphoserine; by PKD/PRKD2. Positions 197-212 are enriched in low complexity; that stretch reads SSPSSSSTPASGCSSP. Residue Ser-283 is modified to Phosphoserine. Residue Thr-286 is modified to Phosphothreonine. 3 disordered regions span residues 349–377, 389–441, and 460–510; these read LHWP…MQPR, KRSA…GPAP, and LPRG…SSSE. At Ser-358 the chain carries Phosphoserine; by PKD/PRKD1. A compositionally biased stretch (pro residues) spans 360 to 374; that stretch reads PLPPSATAPPPPGPM. Ser-364, Ser-405, Ser-486, Ser-487, and Ser-507 each carry phosphoserine. Residues 482–503 are compositionally biased toward low complexity; sequence SRAQSSPAAPASLSAPEPASQA. Positions 512 to 865 are histone deacetylase; sequence PARTLPFTTG…VAALLGNRVD (354 aa). The Zn(2+) site is built by Cys-533, Cys-535, and His-541. Ser-595 is modified (phosphoserine). Residue Cys-618 coordinates Zn(2+). His-670 is an active-site residue. The tract at residues 877 to 952 is interaction with SIN3A; that stretch reads NLNAIRSLEA…LVEEEEPMNL (76 aa). Positions 917–952 match the Nuclear export signal motif; that stretch reads KEEVEAVTALASLSVGILAEDRPSEQLVEEEEPMNL.

This sequence belongs to the histone deacetylase family. HD type 2 subfamily. Interacts with HDAC1, HDAC2, HDAC3, HDAC4, HDAC5, NCOR1, NCOR2, SIN3A, SIN3B, RBBP4, RBBP7, MTA1L1, SAP30 and MBD3. Interacts with KAT5 and EDNRA. Interacts with the 14-3-3 protein YWHAE, MEF2A, MEF2B and MEF2C. Interacts with ZMYND15. Interacts with KDM5B. Interacts with PML. Interacts with FOXP3. Interacts with RARA. May be phosphorylated by CaMK1. Phosphorylated by the PKC kinases PKN1 and PKN2, impairing nuclear import. Phosphorylation at Ser-155 by MARK2, MARK3 and PRKD1 promotes interaction with 14-3-3 proteins and export from the nucleus. Phosphorylation at Ser-155 is a prerequisite for phosphorylation at Ser-181.

The protein resides in the nucleus. The protein localises to the cytoplasm. It carries out the reaction N(6)-acetyl-L-lysyl-[histone] + H2O = L-lysyl-[histone] + acetate. The catalysed reaction is N(6)-acetyl-L-lysyl-[protein] + H2O = L-lysyl-[protein] + acetate. Responsible for the deacetylation of lysine residues on the N-terminal part of the core histones (H2A, H2B, H3 and H4). Histone deacetylation gives a tag for epigenetic repression and plays an important role in transcriptional regulation, cell cycle progression and developmental events. Histone deacetylases act via the formation of large multiprotein complexes. Involved in muscle maturation by repressing transcription of myocyte enhancer factors such as MEF2A, MEF2B and MEF2C. During muscle differentiation, it shuttles into the cytoplasm, allowing the expression of myocyte enhancer factors. May be involved in Epstein-Barr virus (EBV) latency, possibly by repressing the viral BZLF1 gene. Positively regulates the transcriptional repressor activity of FOXP3. Serves as a corepressor of RARA, causing its deacetylation and inhibition of RARE DNA element binding. In association with RARA, plays a role in the repression of microRNA-10a and thereby in the inflammatory response. Also acetylates non-histone proteins, such as ALKBH5. This chain is Histone deacetylase 7 (HDAC7), found in Homo sapiens (Human).